A 62-amino-acid chain; its full sequence is DNA-directed RNA polymerase subunit Rpo10 (62 aa).

Cys-6, Cys-9, Cys-43, and Cys-44 together coordinate Zn(2+).

It belongs to the archaeal Rpo10/eukaryotic RPB10 RNA polymerase subunit family. As to quaternary structure, part of the RNA polymerase complex. The cofactor is Zn(2+).

It is found in the cytoplasm. The enzyme catalyses RNA(n) + a ribonucleoside 5'-triphosphate = RNA(n+1) + diphosphate. In terms of biological role, DNA-dependent RNA polymerase (RNAP) catalyzes the transcription of DNA into RNA using the four ribonucleoside triphosphates as substrates. This is DNA-directed RNA polymerase subunit Rpo10 from Methanosarcina barkeri (strain Fusaro / DSM 804).